We begin with the raw amino-acid sequence, 665 residues long: SH3 domain-containing kinase-binding protein 1 (665 aa).

2 consecutive SH3 domains span residues 1 to 58 and 98 to 157; these read MVEA…EIKK and RRRR…ELSG. A phosphoserine mark is found at serine 156, serine 159, serine 183, and serine 230. The segment at 159–200 is disordered; it reads SDELGISQDEQLSKSSLRETTGSESDGGDSSSTKSEGANGTV. The segment covering 177 to 195 has biased composition (low complexity); it reads ETTGSESDGGDSSSTKSEG. A Phosphothreonine modification is found at threonine 254. Positions 267-328 constitute an SH3 3 domain; that stretch reads KSKDYCKVIF…PDNFVKLLPP (62 aa). Disordered stretches follow at residues 328–444 and 467–610; these read PDFE…LAGS and DSVV…AAVE. Basic and acidic residues predominate over residues 355–390; the sequence is TERKHEIKKIPPERPEMLPNRTEEKERPEREPKLDL. Serine 436 is subject to Phosphoserine. A compositionally biased stretch (polar residues) spans 469–484; it reads VVSSTEKLSHPTTSRP. Positions 491-510 are enriched in low complexity; that stretch reads PPSQSLTSSSLSSPDIFDSP. Phosphoserine occurs at positions 509, 511, and 521. Positions 517–531 are enriched in basic and acidic residues; that stretch reads EEHISLAHRGVDASK. The span at 535–546 shows a compositional bias: polar residues; that stretch reads KTVTISQVSDNK. Residues 564-582 are compositionally biased toward low complexity; the sequence is APLSSAAPSPLSSSLGTAG. At serine 587 the chain carries Phosphoserine. Positions 602 to 664 form a coiled coil; that stretch reads AASSQAAVEE…VNDIKKALQS (63 aa).

In terms of assembly, can self-associate and form homotetramers. Interacts with CD2, F-actin capping protein, PIK3R3, GRB2, EGFR, MET, BLNK, MAP3K4, PDCD6IP, SPRY2, ARHGAP17, ARHGAP27, MAGI2, CRK, BCAR1, SOS1, ASAP1, ARAP3, HIP1R, SYNJ2, INPP5D and STAP1. Interacts with E3 ubiquitin-protein ligases CBL and CBLB, but does not interact with CBLC. Two molecules of SH3KBP1 seem to bind through their respective SH3 1 domain to one molecule of CBLB. The interaction with CBL or CBLB and EGFR is increased upon EGF stimulation. The interaction with CBL is attenuated by PDCD6IP. Interacts (via SH3 domains) with ARAP1. The interaction is independent of EGF and does not affect ARAP1 GTPase-activating activity but is involved in regulating ubiquitination and endocytic trafficking of EGFR. ARAP1 competes with CBL for binding to SH3KBP1 and prevents interaction of CBL with SH3KBP1; this is likely to regulate SH3KBP1-mediated internalization of EGFR. Interacts through its proline-rich region with the SH3 domain of endophilins SH3GL1, SH3GL2 and SH3GL3. The SH3KBP1-endophilin complex seems to associate with a complex containing the phosphorylated receptor (EGFR or MET) and phosphorylated CBL. Probably associates with ASAP1 and phosphorylated EGFR. Probably part of a complex consisting of at least SH3KBP1, ASAP1 and ARAP3. Interacts with focal adhesion kinases PTK2/FAK1 and PTK2B/PYK2, probably as a dimer. Interacts with DAB2 and probably associates with chathrin through its interaction with DAB2. Part of a complex consisting of SH3KBP1, DAB2, and clathrin heavy chain. DAB2 and clathrin dissociate from SH3KBP1 following growth factor treatment, enabling interaction with CBL. Interacts with DDN and probably associates with MAGI2 through its interaction with DDN. Interacts with the SH3 domains of SRC tyrosine-protein kinases SRC, LCK, LYN, FGR, FYN and HCK. Interacts with TRADD, BIRC2, TRAF1, TRAF2 and TNFR1, and the association with a TNFR1-associated complex upon stimulation with TNF-alpha seems to be mediated by SRC. Interacts (via SH3 domains) with SHKBP1 (via PXXXPR motifs). Interaction with CBL is abolished in the presence of SHKBP1. Interacts (via SH3 domains) with ZFP36 (via extreme C-terminal region). Interacts with MAP3K4; this interaction enhances the association with ZFP36. As to quaternary structure, (Microbial infection) Interacts (via SH3 domains) with Chikungunya virus non-structural protein 3 (via C-terminus); this interaction plays a role in initiation of viral replication. Monoubiquitinated by CBL and CBLB after EGF stimulation; probably on its C-terminus. Ubiquitously expressed. Also expressed in some cancer cell lines.

The protein localises to the cytoplasm. The protein resides in the cytoskeleton. Its subcellular location is the cytoplasmic vesicle membrane. It localises to the synapse. It is found in the synaptosome. The protein localises to the cell junction. The protein resides in the focal adhesion. Adapter protein involved in regulating diverse signal transduction pathways. Involved in the regulation of endocytosis and lysosomal degradation of ligand-induced receptor tyrosine kinases, including EGFR and MET/hepatocyte growth factor receptor, through an association with CBL and endophilins. The association with CBL, and thus the receptor internalization, may be inhibited by an interaction with PDCD6IP and/or SPRY2. Involved in regulation of ligand-dependent endocytosis of the IgE receptor. Attenuates phosphatidylinositol 3-kinase activity by interaction with its regulatory subunit. May be involved in regulation of cell adhesion; promotes the interaction between TTK2B and PDCD6IP. May be involved in the regulation of cellular stress response via the MAPK pathways through its interaction with MAP3K4. Is involved in modulation of tumor necrosis factor mediated apoptosis. Plays a role in the regulation of cell morphology and cytoskeletal organization. Required in the control of cell shape and migration. Has an essential role in the stimulation of B cell activation. This Homo sapiens (Human) protein is SH3 domain-containing kinase-binding protein 1 (SH3KBP1).